Here is a 508-residue protein sequence, read N- to C-terminus: uncharacterized protein (508 aa).

Positions 3–163 constitute a Resolvase/invertase-type recombinase catalytic domain; the sequence is KAIAYMRFSS…LSWKKKRQDA (161 aa). S11 functions as the O-(5'-phospho-DNA)-serine intermediate in the catalytic mechanism. The recombinase DNA-binding region spans 175-290; sequence PRWLSLDDKR…QEIRLAPFGI (116 aa).

This is an uncharacterized protein from Escherichia coli (strain K12).